We begin with the raw amino-acid sequence, 536 residues long: Anthranilate synthase component 1 2 (536 aa).

L-tryptophan is bound by residues Ser-59 and 299–301 (PYM). 334–335 (GT) contributes to the chorismate binding site. A Mg(2+)-binding site is contributed by Glu-361. Chorismate-binding positions include Tyr-449, Arg-469, 487-489 (GAG), and Gly-489. Glu-502 contacts Mg(2+).

This sequence belongs to the anthranilate synthase component I family. Tetramer of two components I and two components II. It depends on Mg(2+) as a cofactor.

It catalyses the reaction chorismate + L-glutamine = anthranilate + pyruvate + L-glutamate + H(+). It functions in the pathway amino-acid biosynthesis; L-tryptophan biosynthesis; L-tryptophan from chorismate: step 1/5. This chain is Anthranilate synthase component 1 2 (trpE2), found in Haloarcula marismortui (strain ATCC 43049 / DSM 3752 / JCM 8966 / VKM B-1809) (Halobacterium marismortui).